The chain runs to 427 residues: 3-phosphoshikimate 1-carboxyvinyltransferase (427 aa).

3-phosphoshikimate is bound by residues Lys-20, Ser-21, and Arg-25. Position 20 (Lys-20) interacts with phosphoenolpyruvate. Gly-92 and Arg-120 together coordinate phosphoenolpyruvate. Positions 166, 168, 312, and 339 each coordinate 3-phosphoshikimate. Gln-168 is a phosphoenolpyruvate binding site. Asp-312 functions as the Proton acceptor in the catalytic mechanism. The phosphoenolpyruvate site is built by Arg-343 and Arg-385.

This sequence belongs to the EPSP synthase family. In terms of assembly, monomer.

Its subcellular location is the cytoplasm. The catalysed reaction is 3-phosphoshikimate + phosphoenolpyruvate = 5-O-(1-carboxyvinyl)-3-phosphoshikimate + phosphate. Its pathway is metabolic intermediate biosynthesis; chorismate biosynthesis; chorismate from D-erythrose 4-phosphate and phosphoenolpyruvate: step 6/7. Catalyzes the transfer of the enolpyruvyl moiety of phosphoenolpyruvate (PEP) to the 5-hydroxyl of shikimate-3-phosphate (S3P) to produce enolpyruvyl shikimate-3-phosphate and inorganic phosphate. The polypeptide is 3-phosphoshikimate 1-carboxyvinyltransferase (Streptococcus thermophilus (strain ATCC BAA-250 / LMG 18311)).